Reading from the N-terminus, the 243-residue chain is 4-phosphopantoate--beta-alanine ligase (243 aa).

Residues arginine 15, arginine 37, 176–178, and 182–183 each bind ATP; these read DLN and RT.

The protein belongs to the archaeal phosphopantothenate synthetase family. Homodimer.

It catalyses the reaction (R)-4-phosphopantoate + beta-alanine + ATP = (R)-4'-phosphopantothenate + AMP + diphosphate + H(+). Its pathway is cofactor biosynthesis; coenzyme A biosynthesis. Functionally, catalyzes the condensation of (R)-4-phosphopantoate and beta-alanine to 4'-phosphopantothenate in the CoA biosynthesis pathway. The protein is 4-phosphopantoate--beta-alanine ligase of Methanospirillum hungatei JF-1 (strain ATCC 27890 / DSM 864 / NBRC 100397 / JF-1).